The following is a 370-amino-acid chain: 4-hydroxy-3-methylbut-2-en-1-yl diphosphate synthase (flavodoxin) (370 aa).

Residues cysteine 270, cysteine 273, cysteine 305, and glutamate 312 each contribute to the [4Fe-4S] cluster site.

It belongs to the IspG family. It depends on [4Fe-4S] cluster as a cofactor.

It catalyses the reaction (2E)-4-hydroxy-3-methylbut-2-enyl diphosphate + oxidized [flavodoxin] + H2O + 2 H(+) = 2-C-methyl-D-erythritol 2,4-cyclic diphosphate + reduced [flavodoxin]. Its pathway is isoprenoid biosynthesis; isopentenyl diphosphate biosynthesis via DXP pathway; isopentenyl diphosphate from 1-deoxy-D-xylulose 5-phosphate: step 5/6. In terms of biological role, converts 2C-methyl-D-erythritol 2,4-cyclodiphosphate (ME-2,4cPP) into 1-hydroxy-2-methyl-2-(E)-butenyl 4-diphosphate. In Azotobacter vinelandii (strain DJ / ATCC BAA-1303), this protein is 4-hydroxy-3-methylbut-2-en-1-yl diphosphate synthase (flavodoxin).